The primary structure comprises 143 residues: Immunity protein CdiI (143 aa).

In terms of assembly, interacts with cognate CdiA-CT but not non-cognate CdiA-CT from E.coli strain 536 / UPEC.

In terms of biological role, immunity protein component of a toxin-immunity protein module, which functions as a cellular contact-dependent growth inhibition (CDI) system. CDI modules allow bacteria to communicate with and inhibit the growth of closely related neighboring bacteria in a contact-dependent fashion. Protects cells against the DNase activity of CdiA, its cognate toxin protein, but not against non-cognate CdiA from E.coli strain 536 / UPEC. The sequence is that of Immunity protein CdiI (cdiI) from Dickeya dadantii (strain 3937) (Erwinia chrysanthemi (strain 3937)).